A 368-amino-acid polypeptide reads, in one-letter code: Probable deoxyhypusine synthase (368 aa).

NAD(+)-binding positions include 100-104 (SNLVS), 126-128 (TAG), glutamate 132, and aspartate 233. Spermidine is bound at residue 131–132 (EE). Aspartate 238 serves as a coordination point for spermidine. Glycine 278 is a binding site for NAD(+). Histidine 283 provides a ligand contact to spermidine. NAD(+) is bound at residue 303–304 (TA). Spermidine contacts are provided by residues 309–311 (GSD) and 318–324 (EAISWGK). Lysine 324 (nucleophile) is an active-site residue. 337-338 (EA) is a binding site for NAD(+).

The protein belongs to the deoxyhypusine synthase family. NAD(+) serves as cofactor.

The catalysed reaction is [eIF5A protein]-L-lysine + spermidine = [eIF5A protein]-deoxyhypusine + propane-1,3-diamine. Its pathway is protein modification; eIF5A hypusination. Its function is as follows. Catalyzes the NAD-dependent oxidative cleavage of spermidine and the subsequent transfer of the butylamine moiety of spermidine to the epsilon-amino group of a specific lysine residue of the eIF-5A precursor protein to form the intermediate deoxyhypusine residue. This is Probable deoxyhypusine synthase from Drosophila melanogaster (Fruit fly).